We begin with the raw amino-acid sequence, 320 residues long: Protein rlx (320 aa).

Functionally, this protein is probably required for relaxation complex formation and plasmid mobilization by conjugative plasmids. This is Protein rlx (rlx) from Staphylococcus aureus.